The primary structure comprises 189 residues: Protein GrpE (189 aa).

Residues 1-38 are compositionally biased toward basic and acidic residues; it reads MTKSNETERMEESEETHSSDIRSASESDHASGSDHTES. The tract at residues 1–54 is disordered; it reads MTKSNETERMEESEETHSSDIRSASESDHASGSDHTESADEIPTADAEQGELEQ.

It belongs to the GrpE family. Homodimer.

The protein resides in the cytoplasm. In terms of biological role, participates actively in the response to hyperosmotic and heat shock by preventing the aggregation of stress-denatured proteins, in association with DnaK and GrpE. It is the nucleotide exchange factor for DnaK and may function as a thermosensor. Unfolded proteins bind initially to DnaJ; upon interaction with the DnaJ-bound protein, DnaK hydrolyzes its bound ATP, resulting in the formation of a stable complex. GrpE releases ADP from DnaK; ATP binding to DnaK triggers the release of the substrate protein, thus completing the reaction cycle. Several rounds of ATP-dependent interactions between DnaJ, DnaK and GrpE are required for fully efficient folding. This chain is Protein GrpE, found in Tropheryma whipplei (strain Twist) (Whipple's bacillus).